We begin with the raw amino-acid sequence, 996 residues long: Receptor-like protein kinase HSL1 (996 aa).

An N-terminal signal peptide occupies residues 1–15 (MYLLFLFLLFPTVFS). Over 16 to 618 (LNQDGFILQQ…ENEAKKRGYV (603 aa)) the chain is Extracellular. LRR repeat units lie at residues 59–83 (FSSV…ICRL), 84–107 (SNLA…IAAC), 109–131 (SLQT…LADI), 133–154 (TLVH…SFGK), 155–178 (FENL…FLGN), 179–203 (ISTL…EFGN), 205–228 (TNLE…LGQL), 229–252 (SKLV…LGGL), 253–276 (TNVV…LGNL), 278–299 (SLRL…ELCR), 300–323 (VPLE…IALS), 325–347 (NLYE…LGLN), 348–371 (SPLR…LCAK), 373–395 (ELEE…LADC), 396–419 (RSLT…FWGL), 421–443 (HVNL…IGGA), 444–467 (SNLS…IGSL), 468–491 (DNLN…LMSL), 493–515 (ELGT…IKSW), 516–539 (KKLN…IGSL), 541–562 (VLNY…SLQS), and 563–586 (LKLN…LAKD). Residues Asn-93 and Asn-97 are each glycosylated (N-linked (GlcNAc...) asparagine). N-linked (GlcNAc...) asparagine glycans are attached at residues Asn-143, Asn-178, Asn-186, and Asn-203. Asn-262 carries an N-linked (GlcNAc...) asparagine glycan. N-linked (GlcNAc...) asparagine glycosylation is found at Asn-429 and Asn-445. The N-linked (GlcNAc...) asparagine glycan is linked to Asn-569. A helical transmembrane segment spans residues 619-639 (WLLRSIFVLAAMVLLAGVAWF). The Cytoplasmic portion of the chain corresponds to 640 to 996 (YFKYRTFKKA…EDTSDQGSIA (357 aa)). The 287-residue stretch at 676–962 (LDEDNVIGAG…RRVVKMLQEI (287 aa)) folds into the Protein kinase domain. ATP contacts are provided by residues 682–690 (IGAGASGKV) and Lys-704. Tyr-764 and Tyr-802 each carry phosphotyrosine. Asp-815 functions as the Proton acceptor in the catalytic mechanism. Ser-851 carries the post-translational modification Phosphoserine. Phosphotyrosine occurs at positions 859 and 866. Residue Thr-867 is modified to Phosphothreonine. A disordered region spans residues 967–996 (EDSLHKIRDDKDGKLTPYYNEDTSDQGSIA). Over residues 968–980 (DSLHKIRDDKDGK) the composition is skewed to basic and acidic residues.

Belongs to the protein kinase superfamily. Ser/Thr protein kinase family.

The protein localises to the cell membrane. The enzyme catalyses L-seryl-[protein] + ATP = O-phospho-L-seryl-[protein] + ADP + H(+). It carries out the reaction L-threonyl-[protein] + ATP = O-phospho-L-threonyl-[protein] + ADP + H(+). In Arabidopsis thaliana (Mouse-ear cress), this protein is Receptor-like protein kinase HSL1 (HSL1).